Reading from the N-terminus, the 266-residue chain is Trypsin Blo t 3 (266 aa).

The N-terminal stretch at 1-15 (MKVLVLFCLVSLAAA) is a signal peptide. A propeptide spanning residues 16–35 (GPLKDALNKAQVDAFYAEGY) is cleaved from the precursor. The region spanning 36 to 260 (IVDGSNAADG…RVGNYISWIK (225 aa)) is the Peptidase S1 domain. A disulfide bridge links cysteine 60 with cysteine 76. Active-site charge relay system residues include histidine 75 and aspartate 120. Intrachain disulfides connect cysteine 187-cysteine 204 and cysteine 216-cysteine 240. Catalysis depends on serine 220, which acts as the Charge relay system.

Belongs to the peptidase S1 family.

It is found in the secreted. It carries out the reaction Preferential cleavage: Arg-|-Xaa, Lys-|-Xaa.. This is Trypsin Blo t 3 from Blomia tropicalis (Mite).